The sequence spans 98 residues: Large ribosomal subunit protein bL28 (98 aa).

This sequence belongs to the bacterial ribosomal protein bL28 family.

In Beijerinckia indica subsp. indica (strain ATCC 9039 / DSM 1715 / NCIMB 8712), this protein is Large ribosomal subunit protein bL28.